We begin with the raw amino-acid sequence, 207 residues long: Glutathione S-transferase 3 (207 aa).

The GST N-terminal domain maps to 2–79 (VHYKLTYFNA…YLARKFGFVG (78 aa)). Glutathione contacts are provided by residues Tyr8, Lys43, 49–51 (GQV), and 63–64 (QS). The GST C-terminal domain maps to 81–207 (TAEEELQADE…WLAKRPETRF (127 aa)).

This sequence belongs to the GST superfamily. Sigma family.

The catalysed reaction is RX + glutathione = an S-substituted glutathione + a halide anion + H(+). Conjugation of reduced glutathione to a wide number of exogenous and endogenous hydrophobic electrophiles. The protein is Glutathione S-transferase 3 (gst-3) of Caenorhabditis elegans.